A 325-amino-acid chain; its full sequence is UPF0285 protein MM_0679 (325 aa).

Belongs to the UPF0285 family.

The sequence is that of UPF0285 protein MM_0679 from Methanosarcina mazei (strain ATCC BAA-159 / DSM 3647 / Goe1 / Go1 / JCM 11833 / OCM 88) (Methanosarcina frisia).